A 60-amino-acid polypeptide reads, in one-letter code: Large ribosomal subunit protein bL33 (60 aa).

The protein belongs to the bacterial ribosomal protein bL33 family.

This is Large ribosomal subunit protein bL33 from Cytophaga hutchinsonii (strain ATCC 33406 / DSM 1761 / CIP 103989 / NBRC 15051 / NCIMB 9469 / D465).